Consider the following 340-residue polypeptide: 4-hydroxy-3-methylbut-2-enyl diphosphate reductase (340 aa).

A [4Fe-4S] cluster-binding site is contributed by cysteine 19. (2E)-4-hydroxy-3-methylbut-2-enyl diphosphate-binding residues include histidine 50 and histidine 90. Dimethylallyl diphosphate contacts are provided by histidine 50 and histidine 90. Histidine 50 and histidine 90 together coordinate isopentenyl diphosphate. Cysteine 112 provides a ligand contact to [4Fe-4S] cluster. Histidine 141 lines the (2E)-4-hydroxy-3-methylbut-2-enyl diphosphate pocket. Residue histidine 141 participates in dimethylallyl diphosphate binding. Isopentenyl diphosphate is bound at residue histidine 141. Catalysis depends on glutamate 143, which acts as the Proton donor. A (2E)-4-hydroxy-3-methylbut-2-enyl diphosphate-binding site is contributed by threonine 190. Cysteine 220 lines the [4Fe-4S] cluster pocket. Residues serine 248, serine 249, asparagine 250, and serine 292 each coordinate (2E)-4-hydroxy-3-methylbut-2-enyl diphosphate. 4 residues coordinate dimethylallyl diphosphate: serine 248, serine 249, asparagine 250, and serine 292. Residues serine 248, serine 249, asparagine 250, and serine 292 each coordinate isopentenyl diphosphate.

The protein belongs to the IspH family. [4Fe-4S] cluster is required as a cofactor.

The enzyme catalyses isopentenyl diphosphate + 2 oxidized [2Fe-2S]-[ferredoxin] + H2O = (2E)-4-hydroxy-3-methylbut-2-enyl diphosphate + 2 reduced [2Fe-2S]-[ferredoxin] + 2 H(+). It carries out the reaction dimethylallyl diphosphate + 2 oxidized [2Fe-2S]-[ferredoxin] + H2O = (2E)-4-hydroxy-3-methylbut-2-enyl diphosphate + 2 reduced [2Fe-2S]-[ferredoxin] + 2 H(+). It participates in isoprenoid biosynthesis; dimethylallyl diphosphate biosynthesis; dimethylallyl diphosphate from (2E)-4-hydroxy-3-methylbutenyl diphosphate: step 1/1. It functions in the pathway isoprenoid biosynthesis; isopentenyl diphosphate biosynthesis via DXP pathway; isopentenyl diphosphate from 1-deoxy-D-xylulose 5-phosphate: step 6/6. Functionally, catalyzes the conversion of 1-hydroxy-2-methyl-2-(E)-butenyl 4-diphosphate (HMBPP) into a mixture of isopentenyl diphosphate (IPP) and dimethylallyl diphosphate (DMAPP). Acts in the terminal step of the DOXP/MEP pathway for isoprenoid precursor biosynthesis. The chain is 4-hydroxy-3-methylbut-2-enyl diphosphate reductase from Thermus thermophilus (strain ATCC BAA-163 / DSM 7039 / HB27).